The chain runs to 103 residues: Putative protein YmfH (103 aa).

The segment at 1-34 (MVNAAQRTRVKVEADNRPSVDTHPPGVQPSPGTG) is disordered. Basic and acidic residues predominate over residues 10–20 (VKVEADNRPSV). Helical transmembrane passes span 42-62 (MLCV…TALF) and 73-93 (GLIT…CFVE).

It localises to the cell inner membrane. The chain is Putative protein YmfH (ymfH) from Escherichia coli (strain K12).